A 282-amino-acid chain; its full sequence is Formamidopyrimidine-DNA glycosylase (282 aa).

P2 (schiff-base intermediate with DNA) is an active-site residue. The active-site Proton donor is E3. The Proton donor; for beta-elimination activity role is filled by K61. Residues H93, R112, and K158 each contribute to the DNA site. An FPG-type zinc finger spans residues 244 to 278; the sequence is DAYGREGEGCRRCGAVMHREKFMNRSSFYCPRCQP. Catalysis depends on R268, which acts as the Proton donor; for delta-elimination activity.

The protein belongs to the FPG family. Monomer. The cofactor is Zn(2+).

The catalysed reaction is Hydrolysis of DNA containing ring-opened 7-methylguanine residues, releasing 2,6-diamino-4-hydroxy-5-(N-methyl)formamidopyrimidine.. It carries out the reaction 2'-deoxyribonucleotide-(2'-deoxyribose 5'-phosphate)-2'-deoxyribonucleotide-DNA = a 3'-end 2'-deoxyribonucleotide-(2,3-dehydro-2,3-deoxyribose 5'-phosphate)-DNA + a 5'-end 5'-phospho-2'-deoxyribonucleoside-DNA + H(+). Involved in base excision repair of DNA damaged by oxidation or by mutagenic agents. Acts as a DNA glycosylase that recognizes and removes damaged bases. Has a preference for oxidized purines, such as 7,8-dihydro-8-oxoguanine (8-oxoG). Has AP (apurinic/apyrimidinic) lyase activity and introduces nicks in the DNA strand. Cleaves the DNA backbone by beta-delta elimination to generate a single-strand break at the site of the removed base with both 3'- and 5'-phosphates. The chain is Formamidopyrimidine-DNA glycosylase from Mycobacterium leprae (strain Br4923).